The sequence spans 311 residues: Formimidoylglutamase (311 aa).

Mn(2+) contacts are provided by His130, Asp155, His157, Asp159, Cys242, and Asp244.

Belongs to the arginase family. Mn(2+) is required as a cofactor.

The enzyme catalyses N-formimidoyl-L-glutamate + H2O = formamide + L-glutamate. It functions in the pathway amino-acid degradation; L-histidine degradation into L-glutamate; L-glutamate from N-formimidoyl-L-glutamate (hydrolase route): step 1/1. Its function is as follows. Catalyzes the conversion of N-formimidoyl-L-glutamate to L-glutamate and formamide. The chain is Formimidoylglutamase from Staphylococcus aureus (strain MSSA476).